The chain runs to 68 residues: MPQLNTTVWPTMITPMLLTLFLITQLKMLNTNYHLPPSPKPMKMKNYNKPWEPKWTKICSLHSLPPQS.

The chain crosses the membrane as a helical span at residues 8-21 (VWPTMITPMLLTLF). At Lys-54 the chain carries N6-acetyllysine; alternate. At Lys-54 the chain carries N6-succinyllysine; alternate. An N6-acetyllysine modification is found at Lys-57.

This sequence belongs to the ATPase protein 8 family. Component of the ATP synthase complex composed at least of ATP5F1A/subunit alpha, ATP5F1B/subunit beta, ATP5MC1/subunit c (homooctomer), MT-ATP6/subunit a, MT-ATP8/subunit 8, ATP5ME/subunit e, ATP5MF/subunit f, ATP5MG/subunit g, ATP5MK/subunit k, ATP5MJ/subunit j, ATP5F1C/subunit gamma, ATP5F1D/subunit delta, ATP5F1E/subunit epsilon, ATP5PF/subunit F6, ATP5PB/subunit b, ATP5PD/subunit d, ATP5PO/subunit OSCP. ATP synthase complex consists of a soluble F(1) head domain (subunits alpha(3) and beta(3)) - the catalytic core - and a membrane F(0) domain - the membrane proton channel (subunits c, a, 8, e, f, g, k and j). These two domains are linked by a central stalk (subunits gamma, delta, and epsilon) rotating inside the F1 region and a stationary peripheral stalk (subunits F6, b, d, and OSCP). Interacts with PRICKLE3.

The protein localises to the mitochondrion membrane. Its function is as follows. Subunit 8, of the mitochondrial membrane ATP synthase complex (F(1)F(0) ATP synthase or Complex V) that produces ATP from ADP in the presence of a proton gradient across the membrane which is generated by electron transport complexes of the respiratory chain. ATP synthase complex consist of a soluble F(1) head domain - the catalytic core - and a membrane F(1) domain - the membrane proton channel. These two domains are linked by a central stalk rotating inside the F(1) region and a stationary peripheral stalk. During catalysis, ATP synthesis in the catalytic domain of F(1) is coupled via a rotary mechanism of the central stalk subunits to proton translocation. In vivo, can only synthesize ATP although its ATP hydrolase activity can be activated artificially in vitro. Part of the complex F(0) domain. The chain is ATP synthase F(0) complex subunit 8 from Homo sapiens (Human).